The primary structure comprises 547 residues: Vacuolar fusion protein MON1 homolog B (547 aa).

Met1 carries the post-translational modification N-acetylmethionine. Over residues 1 to 15 (MEVGGDTAAPAPGGA) the composition is skewed to low complexity. The segment at 1-106 (MEVGGDTAAP…GGDPSDEEWR (106 aa)) is disordered. Phosphoserine is present on residues Ser59 and Ser61.

Belongs to the MON1/SAND family. In terms of assembly, interacts with CCNT2; down-regulates CCNT2-mediated activation of viral promoters during herpes simplex virus 1/HHV-1 infection. Found in a complex with RMC1, CCZ1 MON1A and MON1B.

The polypeptide is Vacuolar fusion protein MON1 homolog B (MON1B) (Homo sapiens (Human)).